The sequence spans 619 residues: Tyrosine-protein kinase ZAP-70 (619 aa).

The SH2 1 domain maps to 10–102 (FFYGSISRAE…GLPCNLRKPC (93 aa)). An interdomain A region spans residues 103-162 (NRPSGLEPQPGVFDCLRDAMVRDYVRQTWKLEGEALEQAIISQAPQVEKLIATTAHERMP). One can recognise an SH2 2 domain in the interval 163 to 254 (WYHSSLTREE…GLIYCLKEAC (92 aa)). Tyr-248 carries the post-translational modification Phosphotyrosine. Residues 255–337 (PNSSASNASG…KKLFLKRDNL (83 aa)) form an interdomain B region. The segment at 260-309 (SNASGAAAPTLPAHPSTLTHPQRRIDTLNSDGYTPEPARITSPDKPRPMP) is disordered. Ser-289 carries the post-translational modification Phosphoserine. Tyr-292 is modified (phosphotyrosine). At Tyr-315 the chain carries Phosphotyrosine; by LCK. At Tyr-319 the chain carries Phosphotyrosine. Residues 338–600 (LIADIELGCG…QRMRACYYSL (263 aa)) form the Protein kinase domain. Residues 345-352 (GCGNFGSV) and Lys-369 each bind ATP. Asp-461 functions as the Proton acceptor in the catalytic mechanism. A phosphotyrosine mark is found at Tyr-492 and Tyr-493. Lys-544 participates in a covalent cross-link: Glycyl lysine isopeptide (Lys-Gly) (interchain with G-Cter in ubiquitin). Position 603 is an N6-acetyllysine (Lys-603).

This sequence belongs to the protein kinase superfamily. Tyr protein kinase family. SYK/ZAP-70 subfamily. Interacts with CD247/CD3Z; this interaction docks ZAP70 at the stimulated TCR. Interacts with NFAM1. Interacts with adapter protein SLA; this interaction negatively regulates T-cell receptor signaling. Interacts with FCRL3. Interacts with VAV1. Interacts with CBL; this interaction promotes ubiquitination, internalization and subsequent degradation of CD247/CD3Z. Identified in a complex with CBL and UBE2L3. Interacts with SHB. Interacts with adapter protein SLA2; this interaction negatively regulates T-cell receptor signaling. Interacts with CBLB. Interacts (via SH2 domains) with RHOH; this interaction regulates ZAP70 subcellular localization. Interacts with DEF6. Interacts (ubiquitinated form) with OTUD7B and UBASH3B. Phosphorylated on tyrosine residues upon T-cell antigen receptor (TCR) stimulation. Phosphorylation of Tyr-315 and Tyr-319 are essential for ZAP70 positive function on T-lymphocyte activation whereas Tyr-292 has a negative regulatory role. Within the C-terminal kinase domain, Tyr-492 and Tyr-493 are phosphorylated after TCR induction, Tyr-492 playing a negative regulatory role and Tyr-493 a positive. Tyr-493 is dephosphorylated by PTN22. In terms of processing, ubiquitinated in response to T cell activation. Deubiquitinated by OTUD7B. Expressed in T- and natural killer cells. Also present in early thymocytes and pro/pre B-cells.

It is found in the cytoplasm. It localises to the cell membrane. It catalyses the reaction L-tyrosyl-[protein] + ATP = O-phospho-L-tyrosyl-[protein] + ADP + H(+). Its activity is regulated as follows. Activated by phosphorylation at Tyr-493 in the activation loop. Inhibited by staurosporine. In terms of biological role, tyrosine kinase that plays an essential role in regulation of the adaptive immune response. Regulates motility, adhesion and cytokine expression of mature T-cells, as well as thymocyte development. Also contributes to the development and activation of primary B-lymphocytes. When antigen presenting cells (APC) activate T-cell receptor (TCR), a serie of phosphorylations lead to the recruitment of ZAP70 to the doubly phosphorylated TCR component CD247/CD3Z through ITAM motif at the plasma membrane. This recruitment serves to localization to the stimulated TCR and to relieve its autoinhibited conformation. Release of ZAP70 active conformation is further stabilized by phosphorylation mediated by LCK. Subsequently, ZAP70 phosphorylates at least 2 essential adapter proteins: LAT and LCP2. In turn, a large number of signaling molecules are recruited and ultimately lead to lymphokine production, T-cell proliferation and differentiation. Furthermore, ZAP70 controls cytoskeleton modifications, adhesion and mobility of T-lymphocytes, thus ensuring correct delivery of effectors to the APC. ZAP70 is also required for TCR-CD247/CD3Z internalization and degradation through interaction with the E3 ubiquitin-protein ligase CBL and adapter proteins SLA and SLA2. Thus, ZAP70 regulates both T-cell activation switch on and switch off by modulating TCR expression at the T-cell surface. During thymocyte development, ZAP70 promotes survival and cell-cycle progression of developing thymocytes before positive selection (when cells are still CD4/CD8 double negative). Additionally, ZAP70-dependent signaling pathway may also contribute to primary B-cells formation and activation through B-cell receptor (BCR). This is Tyrosine-protein kinase ZAP-70 (ZAP70) from Homo sapiens (Human).